Here is a 182-residue protein sequence, read N- to C-terminus: CD-NTase-associated protein 15 (182 aa).

The next 2 membrane-spanning stretches (helical) occupy residues 11–31 and 33–53; these read ITGW…CTVW and IGWI…TIGY.

Belongs to the CBASS Cap15 membrane effector family. The beta barrel domain oligomerizes; in the presence of cyclic nucleotides (probably 3',2'-cGAMP) higher-level oligomers occur.

Its subcellular location is the cell membrane. Functionally, effector protein of a CBASS antivirus system. CBASS (cyclic oligonucleotide-based antiphage signaling system) provides immunity against bacteriophage. The CD-NTase protein (CdnE) synthesizes cyclic nucleotides in response to infection; these serve as specific second messenger signals. The signals activate a diverse range of effectors, leading to bacterial cell death and thus abortive phage infection. This system triggers membrane disruption without lysis. A type I-B CBASS system. Binds cyclic nucleotide second messenger 3',2'-cGAMP, probably oligomerizing, and induces cell membrane shrinkage and rupture, leading to cell death. Its function is as follows. Protects S.aureus against phage infection. When the CBASS operon (cdnE-cap15) is introduced in S.aureus strain RN4220 there is strong protection against lytic DNA phages 80alpha-vir and phi-NM1-gamma-6 but little to no protection against phages phi-NM4-gamma-4 or phi-12-gamma-3. In Staphylococcus schleiferi, this protein is CD-NTase-associated protein 15.